The sequence spans 88 residues: Small ribosomal subunit protein bS20 (88 aa).

Residues 1–27 (MANTASAKKMTRKIAKRTAINRSRRSR) are disordered.

It belongs to the bacterial ribosomal protein bS20 family.

Its function is as follows. Binds directly to 16S ribosomal RNA. This is Small ribosomal subunit protein bS20 from Methylobacterium radiotolerans (strain ATCC 27329 / DSM 1819 / JCM 2831 / NBRC 15690 / NCIMB 10815 / 0-1).